The primary structure comprises 208 residues: Large ribosomal subunit protein uL4 (208 aa).

Residues 44–79 are disordered; the sequence is QRQGTHKSKERSEISGSTRKIGRQKGGGGARRGDMN.

Belongs to the universal ribosomal protein uL4 family. In terms of assembly, part of the 50S ribosomal subunit.

Functionally, one of the primary rRNA binding proteins, this protein initially binds near the 5'-end of the 23S rRNA. It is important during the early stages of 50S assembly. It makes multiple contacts with different domains of the 23S rRNA in the assembled 50S subunit and ribosome. In terms of biological role, forms part of the polypeptide exit tunnel. This chain is Large ribosomal subunit protein uL4, found in Bacteroides fragilis (strain YCH46).